The sequence spans 274 residues: Large ribosomal subunit protein uL2 (274 aa).

Disordered stretches follow at residues Lys-28–Ile-54 and Arg-221–Lys-274. Residues Lys-39–Ile-49 are compositionally biased toward polar residues.

It belongs to the universal ribosomal protein uL2 family. Part of the 50S ribosomal subunit. Forms a bridge to the 30S subunit in the 70S ribosome.

One of the primary rRNA binding proteins. Required for association of the 30S and 50S subunits to form the 70S ribosome, for tRNA binding and peptide bond formation. It has been suggested to have peptidyltransferase activity; this is somewhat controversial. Makes several contacts with the 16S rRNA in the 70S ribosome. This Edwardsiella ictaluri (strain 93-146) protein is Large ribosomal subunit protein uL2.